Consider the following 222-residue polypeptide: Secreted protein D (222 aa).

The signal sequence occupies residues 1–22 (MKIYYLFFVLIYLIYFINLVYC). A glycan (N-linked (GlcNAc...) asparagine) is linked at N25.

The protein belongs to the Sct family.

The protein resides in the secreted. The chain is Secreted protein D from Dictyostelium discoideum (Social amoeba).